A 127-amino-acid polypeptide reads, in one-letter code: ATP synthase epsilon chain (127 aa).

Belongs to the ATPase epsilon chain family. As to quaternary structure, F-type ATPases have 2 components, CF(1) - the catalytic core - and CF(0) - the membrane proton channel. CF(1) has five subunits: alpha(3), beta(3), gamma(1), delta(1), epsilon(1). CF(0) has three main subunits: a, b and c.

Its subcellular location is the cell inner membrane. In terms of biological role, produces ATP from ADP in the presence of a proton gradient across the membrane. In Leptospira borgpetersenii serovar Hardjo-bovis (strain JB197), this protein is ATP synthase epsilon chain.